The primary structure comprises 126 residues: UPF0102 protein Cphamn1_0017 (126 aa).

The protein belongs to the UPF0102 family.

The polypeptide is UPF0102 protein Cphamn1_0017 (Chlorobium phaeobacteroides (strain BS1)).